A 594-amino-acid polypeptide reads, in one-letter code: (E)-beta-ocimene synthase TPS6FN (594 aa).

(2E)-geranyl diphosphate-binding residues include Arg303, Asp340, Asp344, Arg489, and Asn492. Residues Asp340 and Asp344 each contribute to the Mg(2+) site. The DDXXD motif motif lies at 340 to 344 (DDIYD). Mg(2+) is bound by residues Asn492, Thr496, and Glu500.

The protein belongs to the terpene synthase family. Tpsb subfamily. Mg(2+) serves as cofactor. Mn(2+) is required as a cofactor. As to expression, expressed in glandular trichomes two to four weeks after flowering onset.

It catalyses the reaction (2E)-geranyl diphosphate = (E)-beta-ocimene + diphosphate. It carries out the reaction (2E)-geranyl diphosphate = (Z)-beta-ocimene + diphosphate. It functions in the pathway secondary metabolite biosynthesis; terpenoid biosynthesis. Functionally, involved in monoterpene (C10) olefins biosynthesis, constituants of cannabinoids and terpenoids-rich resins. Catalyzes mainly the conversion of (2E)-geranyl diphosphate to (E)-beta-ocimene, and also produces minor products such as (Z)-beta-ocimene. The polypeptide is (E)-beta-ocimene synthase TPS6FN (Cannabis sativa (Hemp)).